Reading from the N-terminus, the 439-residue chain is Microfibrillar-associated protein 1 (439 aa).

Disordered regions lie at residues 1–27 (MSVP…NEKG) and 39–200 (YVSG…PRLK). S2 is subject to N-acetylserine. 2 positions are modified to phosphoserine: S52 and S53. The span at 61–70 (QFIKKAKEQE) shows a compositional bias: basic and acidic residues. K67 is covalently cross-linked (Glycyl lysine isopeptide (Lys-Gly) (interchain with G-Cter in SUMO2)). Residues 71–81 (AEPEEQEEDSS) show a composition bias toward acidic residues. Phosphoserine is present on residues S94, S116, S118, S132, and S133. 2 stretches are compositionally biased toward acidic residues: residues 112 to 122 (VVGESDSEVEG) and 131 to 144 (DSSE…DDEE). The span at 145–163 (IERRRGMMRQRAQERKNEE) shows a compositional bias: basic and acidic residues. Positions 178-195 (ESESESEYEEYTDSEDEM) are enriched in acidic residues. Residue K249 forms a Glycyl lysine isopeptide (Lys-Gly) (interchain with G-Cter in SUMO2) linkage. The residue at position 267 (T267) is a Phosphothreonine. K357 participates in a covalent cross-link: Glycyl lysine isopeptide (Lys-Gly) (interchain with G-Cter in SUMO2). S361 is modified (phosphoserine). Glycyl lysine isopeptide (Lys-Gly) (interchain with G-Cter in SUMO2) cross-links involve residues K371, K381, K415, and K418. The residue at position 432 (S432) is a Phosphoserine.

Belongs to the MFAP1 family. In terms of assembly, component of the spliceosome B complex. Interacts with PRPF38A (via N-terminal interaction domain).

Its subcellular location is the nucleus. Its function is as follows. Involved in pre-mRNA splicing as a component of the spliceosome. This Homo sapiens (Human) protein is Microfibrillar-associated protein 1.